We begin with the raw amino-acid sequence, 382 residues long: MKLHEYEAKELFLRYGVKIPPGKLALTPDEVRKIAEEIGTPVVLKAQVVVAGRGKAGGIKIAQTPEEAYELSKKMFGMNIKGLVVRKLYVTKYVEVEREMYLSLIIDRASRRYLFLASPIGGVDIEEIAKTSPEKIKKVYVDPSIGLRDYHIRSIISWLGFKPGSQQWQQTASVIQAMYRIMVDYDAELVETNPLALSKEGEVIPLDARVIVDDNALFKHPDLEKALEEDPRDITEFEAYAKKIGFHYVELDGDIGIIGNGAGLTMATMDLVYHFGGRPANFLDIGGGASREVVKEAVKVLLNHPRVKVIFVNIFGGITRADEVALGIKDALAEVKEHTKKIVVRIKGTNEEQGKAILSEIGIPLFENAEEAAKKAVELAKI.

The 232-residue stretch at 9–240 (KELFLRYGVK…PRDITEFEAY (232 aa)) folds into the ATP-grasp domain. Residues Lys-45, 52–54 (GRG), Val-94, and Glu-99 each bind ATP. Positions 193 and 207 each coordinate Mg(2+). Residues Asn-260 and 317 to 319 (GIT) each bind substrate.

Belongs to the succinate/malate CoA ligase beta subunit family. Heterotetramer of two alpha and two beta subunits. It depends on Mg(2+) as a cofactor.

The catalysed reaction is succinate + ATP + CoA = succinyl-CoA + ADP + phosphate. It carries out the reaction GTP + succinate + CoA = succinyl-CoA + GDP + phosphate. Its pathway is carbohydrate metabolism; tricarboxylic acid cycle; succinate from succinyl-CoA (ligase route): step 1/1. Functionally, succinyl-CoA synthetase functions in the citric acid cycle (TCA), coupling the hydrolysis of succinyl-CoA to the synthesis of either ATP or GTP and thus represents the only step of substrate-level phosphorylation in the TCA. The beta subunit provides nucleotide specificity of the enzyme and binds the substrate succinate, while the binding sites for coenzyme A and phosphate are found in the alpha subunit. The chain is Succinate--CoA ligase [ADP-forming] subunit beta from Pyrobaculum islandicum (strain DSM 4184 / JCM 9189 / GEO3).